A 119-amino-acid chain; its full sequence is Na(+)/H(+) antiporter subunit G (119 aa).

3 consecutive transmembrane segments (helical) span residues 7–29, 44–61, and 66–88; these read IISI…IIRF, TLGV…FFLV, and VGKL…MMMG.

The protein belongs to the CPA3 antiporters (TC 2.A.63) subunit G family. As to quaternary structure, forms a heterooligomeric complex that consists of seven subunits: MrpA, MrpB, MrpC, MrpD, MrpE, MrpF and MrpG.

The protein localises to the cell membrane. Mnh complex is a Na(+)Li(+)/H(+) antiporter involved in Na(+) and/or Li(+) excretion and Na(+) resistance. Na(+)/H(+) antiport consumes a transmembrane electrical potential, and is thus inferred to be electrogenic. Does not transport K(+), Ca(2+) or Mg(2+). The sequence is that of Na(+)/H(+) antiporter subunit G (mrpG) from Alkalihalophilus pseudofirmus (strain ATCC BAA-2126 / JCM 17055 / OF4) (Bacillus pseudofirmus).